The primary structure comprises 255 residues: MTKEFLPTILKQKQEELASLIMEEVKPLRLTYRLFDFLKEHHDQLQIVAEVKKASPSMGDINLDVDIVKQAQMYEAAGAAMISVLTDQVFFKGNIDFLAEISGSVSIPTLAKDFIIDEKQIVRSRNAGATVILLIVAALPEKRLKELYDFAAGLGLEVLVETHNLSELEIAHRIGAQIIGVNNRNLVTFEVDINTSLELSTHFRDDKVYISESGIFTGQDSKLVAPYFNAILVGTALMQADNVADKVKELAIDKG.

Belongs to the TrpC family.

The catalysed reaction is 1-(2-carboxyphenylamino)-1-deoxy-D-ribulose 5-phosphate + H(+) = (1S,2R)-1-C-(indol-3-yl)glycerol 3-phosphate + CO2 + H2O. It participates in amino-acid biosynthesis; L-tryptophan biosynthesis; L-tryptophan from chorismate: step 4/5. The chain is Indole-3-glycerol phosphate synthase from Streptococcus mutans serotype c (strain ATCC 700610 / UA159).